The primary structure comprises 589 residues: Mitogen-activated protein kinase 8 (589 aa).

Positions 18–56 (RPSSSSSSSSSNNNNNNHEQPIFNSSSFSSSSNPNHSAN) are disordered. 2 stretches are compositionally biased toward low complexity: residues 20–34 (SSSS…NNNN) and 41–56 (NSSS…HSAN). One can recognise a Protein kinase domain in the interval 104–395 (YQIQEVVGKG…AEDALADPYF (292 aa)). Residues 110-118 (VGKGSYGVV) and K133 each bind ATP. Residue D230 is the Proton acceptor of the active site. T266 is modified (phosphothreonine). The TXY motif lies at 266 to 268 (TDY). Position 268 is a phosphotyrosine (Y268). Residue T271 is modified to Phosphothreonine. Positions 474–589 (NQGKPGAAGG…TDKVASLHNS (116 aa)) are disordered.

This sequence belongs to the protein kinase superfamily. CMGC Ser/Thr protein kinase family. MAP kinase subfamily. In terms of assembly, interacts with CAM3, CAM4 and CAM7 in an calcium-dependent manner. Dually phosphorylated on Thr-266 and Tyr-268, which activates the enzyme. Autophosphorylated. Ubiquitous.

It carries out the reaction L-seryl-[protein] + ATP = O-phospho-L-seryl-[protein] + ADP + H(+). The catalysed reaction is L-threonyl-[protein] + ATP = O-phospho-L-threonyl-[protein] + ADP + H(+). With respect to regulation, activated by threonine and tyrosine phosphorylation. Activated by two independent mechanisms, the binding of CAMs in a calcium-dependent manner and the phosphorylation by MAP kinase kinase MKK3. Activated in response to mechanical wounding, hydrogen peroxide and jasmonic acid (JA). MKK3-MPK8 and CAMs-MPK8 modules negatively regulates ROS accumulation through controlling expression of the RBOHD gene during wounding. This chain is Mitogen-activated protein kinase 8 (MPK8), found in Arabidopsis thaliana (Mouse-ear cress).